Reading from the N-terminus, the 282-residue chain is tRNA pseudouridine synthase B (282 aa).

The active-site Nucleophile is the D36.

Belongs to the pseudouridine synthase TruB family. Type 1 subfamily.

It carries out the reaction uridine(55) in tRNA = pseudouridine(55) in tRNA. Responsible for synthesis of pseudouridine from uracil-55 in the psi GC loop of transfer RNAs. This Mycoplasmopsis pulmonis (strain UAB CTIP) (Mycoplasma pulmonis) protein is tRNA pseudouridine synthase B.